The sequence spans 197 residues: Recombination protein RecR (197 aa).

A C4-type zinc finger spans residues 57–72; sequence CSVCFAITEDDPCWIC. Positions 79-174 constitute a Toprim domain; the sequence is GTICVVEEPQ…KVTRLAHGIP (96 aa).

The protein belongs to the RecR family.

May play a role in DNA repair. It seems to be involved in an RecBC-independent recombinational process of DNA repair. It may act with RecF and RecO. This Citrifermentans bemidjiense (strain ATCC BAA-1014 / DSM 16622 / JCM 12645 / Bem) (Geobacter bemidjiensis) protein is Recombination protein RecR.